Consider the following 117-residue polypeptide: Large ribosomal subunit protein uL18 (117 aa).

The protein belongs to the universal ribosomal protein uL18 family. In terms of assembly, part of the 50S ribosomal subunit; part of the 5S rRNA/L5/L18/L25 subcomplex. Contacts the 5S and 23S rRNAs.

Functionally, this is one of the proteins that bind and probably mediate the attachment of the 5S RNA into the large ribosomal subunit, where it forms part of the central protuberance. This chain is Large ribosomal subunit protein uL18, found in Vibrio atlanticus (strain LGP32) (Vibrio splendidus (strain Mel32)).